The primary structure comprises 992 residues: Sorting nexin-19 (992 aa).

A PXA domain is found at 95–272 (ERQLEREINR…VLVGIFSKAR (178 aa)). Positions 410–442 (ALEPKDGEASEGAEAEEGPGTETETGLPVSTLN) are disordered. Over residues 418-428 (ASEGAEAEEGP) the composition is skewed to acidic residues. The 131-residue stretch at 533–663 (LRITGTITAR…EFLALNTDAR (131 aa)) folds into the PX domain. 2 residues coordinate a 1,2-diacyl-sn-glycero-3-phospho-(1D-myo-inositol-3-phosphate): R582 and R629. 3 disordered regions span residues 692-726 (FPRSEPQSPTEELSEAETESKPQTEGKKASKSRLR), 778-797 (QPTKAPEKDPEQPPKGRVDS), and 973-992 (AATTSASDTPGNSKRMGVSS). 2 stretches are compositionally biased toward basic and acidic residues: residues 709 to 719 (TESKPQTEGKK) and 782 to 795 (APEKDPEQPPKGRV). Residues 980 to 992 (DTPGNSKRMGVSS) show a composition bias toward polar residues.

It belongs to the sorting nexin family. Interacts with PTPRN.

The protein localises to the early endosome membrane. Its subcellular location is the cytoplasmic vesicle membrane. Functionally, plays a role in intracellular vesicle trafficking and exocytosis. May play a role in maintaining insulin-containing dense core vesicles in pancreatic beta-cells and in preventing their degradation. May play a role in insulin secretion. Interacts with membranes containing phosphatidylinositol 3-phosphate (PtdIns(3P)). The chain is Sorting nexin-19 (SNX19) from Homo sapiens (Human).